A 321-amino-acid chain; its full sequence is Cytochrome f (321 aa).

Positions 1–37 (MKIYRQIKQSFSITKIVFSFFISLLLNLVAQPTICQA) are cleaved as a signal peptide. Heme contacts are provided by F38, C58, C61, and H62. A helical membrane pass occupies residues 287 to 306 (VQGLIAFFISVVLAQIFLVL).

This sequence belongs to the cytochrome f family. In terms of assembly, the 4 large subunits of the cytochrome b6-f complex are cytochrome b6, subunit IV (17 kDa polypeptide, petD), cytochrome f and the Rieske protein, while the 4 small subunits are PetG, PetL, PetM and PetN. The complex functions as a dimer. Heme is required as a cofactor.

The protein localises to the plastid. Its subcellular location is the cyanelle thylakoid membrane. Its function is as follows. Component of the cytochrome b6-f complex, which mediates electron transfer between photosystem II (PSII) and photosystem I (PSI), cyclic electron flow around PSI, and state transitions. The chain is Cytochrome f (petA) from Cyanophora paradoxa.